We begin with the raw amino-acid sequence, 156 residues long: Transcription elongation factor GreA (156 aa).

Residues 1 to 32 (MKKVRLTREGYEKLKKELEDLKRKFMYEISER) adopt a coiled-coil conformation.

The protein belongs to the GreA/GreB family.

In terms of biological role, necessary for efficient RNA polymerase transcription elongation past template-encoded arresting sites. The arresting sites in DNA have the property of trapping a certain fraction of elongating RNA polymerases that pass through, resulting in locked ternary complexes. Cleavage of the nascent transcript by cleavage factors such as GreA or GreB allows the resumption of elongation from the new 3'terminus. GreA releases sequences of 2 to 3 nucleotides. In Thermotoga sp. (strain RQ2), this protein is Transcription elongation factor GreA.